The sequence spans 358 residues: Carbohydrate sulfotransferase 10 (358 aa).

The Cytoplasmic segment spans residues 1–6 (MHHQWL). The helical; Signal-anchor for type II membrane protein transmembrane segment at 7–27 (LLAACFWVIFMFMVASKFITL) threads the bilayer. Topologically, residues 28–358 (TFKDPDGYGA…GYRVPDFLLN (331 aa)) are lumenal. An N-linked (GlcNAc...) asparagine glycan is attached at N101. 3'-phosphoadenylyl sulfate is bound by residues 129 to 135 (PKVGNTQ) and 191 to 199 (RDPFERLIS). A glycan (N-linked (GlcNAc...) asparagine) is linked at N318.

Belongs to the sulfotransferase 2 family. In terms of tissue distribution, predominantly expressed in hypertrophic, prehypertrophic and proliferative chondrocytes at E12 but is down-regulated in epiphyseal chondrocytes.

The protein localises to the golgi apparatus membrane. In terms of biological role, catalyzes the transfer of sulfate to position 3 of terminal glucuronic acid of both protein- and lipid-linked oligosaccharides. Participates in biosynthesis of HNK-1 carbohydrate structure, a sulfated glucuronyl-lactosaminyl residue carried by many neural recognition molecules, which is involved in cell interactions during ontogenetic development and in synaptic plasticity in the adult. The polypeptide is Carbohydrate sulfotransferase 10 (CHST10) (Gallus gallus (Chicken)).